We begin with the raw amino-acid sequence, 250 residues long: MRKTIIAGNWKMNLSLKEAVFLAHSIREKIPSISKDKVSMVFPSTLHLENVSKILEGSSVIVGAQNCYHSGLAAFTGETSPDQLKEIGVKVVMVGHSERRQFLGESNFFCNDKIRFLLKNEFTVLYCVGETLSERESGKTLEVLSSQIREGLKGIDSVFFSNLILAYEPVWAIGTGKVATPSQAQEVHSFIRKEISGLFVGASSISESISILYGGSVKPDNIQDLLKEKDIDGGLVGGASQKISSFAGLF.

9-11 (NWK) provides a ligand contact to substrate. The Electrophile role is filled by His96. The active-site Proton acceptor is Glu168. Substrate contacts are provided by residues Gly174, Ser216, and 237 to 238 (GG).

It belongs to the triosephosphate isomerase family. In terms of assembly, homodimer.

Its subcellular location is the cytoplasm. The enzyme catalyses D-glyceraldehyde 3-phosphate = dihydroxyacetone phosphate. The protein operates within carbohydrate biosynthesis; gluconeogenesis. Its pathway is carbohydrate degradation; glycolysis; D-glyceraldehyde 3-phosphate from glycerone phosphate: step 1/1. Involved in the gluconeogenesis. Catalyzes stereospecifically the conversion of dihydroxyacetone phosphate (DHAP) to D-glyceraldehyde-3-phosphate (G3P). The sequence is that of Triosephosphate isomerase from Leptospira interrogans serogroup Icterohaemorrhagiae serovar copenhageni (strain Fiocruz L1-130).